We begin with the raw amino-acid sequence, 182 residues long: Ribosome-recycling factor (182 aa).

A disordered region spans residues 136-160 (VKKSEKDGDLSEDQSRDEQETIQKE).

Belongs to the RRF family.

It is found in the cytoplasm. Functionally, responsible for the release of ribosomes from messenger RNA at the termination of protein biosynthesis. May increase the efficiency of translation by recycling ribosomes from one round of translation to another. The polypeptide is Ribosome-recycling factor (Prochlorococcus marinus (strain NATL2A)).